A 374-amino-acid polypeptide reads, in one-letter code: CMP-N-acetylneuraminate-beta-1,4-galactoside alpha-2,3-sialyltransferase (374 aa).

Over Met1–Arg8 the chain is Cytoplasmic. A helical; Signal-anchor for type II membrane protein transmembrane segment spans residues Asn9 to Trp28. The Lumenal segment spans residues Lys29–Ile374. Residues Asn79 and Asn170 are each glycosylated (N-linked (GlcNAc...) asparagine). Cys159 and Cys313 are disulfide-bonded.

This sequence belongs to the glycosyltransferase 29 family. Found in all tissues tested. High expression found in brain, liver, kidney, colon, heart and spleen.

Its subcellular location is the membrane. It localises to the golgi apparatus. The protein localises to the golgi stack membrane. It catalyses the reaction a beta-D-galactosyl-(1-&gt;4)-N-acetyl-beta-D-glucosaminyl derivative + CMP-N-acetyl-beta-neuraminate = an N-acetyl-alpha-neuraminyl-(2-&gt;3)-beta-D-galactosyl-(1-&gt;4)-N-acetyl-beta-D-glucosaminyl derivative + CMP + H(+). It functions in the pathway protein modification; protein glycosylation. Catalyzes the formation of the NeuAc-alpha-2,3-Gal-beta-1,4-GlcNAc-, NeuAc-alpha-2,3-Gal-beta-1,3-GlcNAc- and NeuAc-alpha-2,3-Gal-beta-1,3-GalNAc- sequences found in terminal carbohydrate groups of glycoproteins and glycolipids. The highest activity is toward Gal-beta-1,3-GlcNAc and the lowest toward Gal-beta-1,3-GalNAc. The polypeptide is CMP-N-acetylneuraminate-beta-1,4-galactoside alpha-2,3-sialyltransferase (St3gal3) (Mus musculus (Mouse)).